The primary structure comprises 232 residues: Multiple organellar RNA editing factor 6, mitochondrial (232 aa).

A mitochondrion-targeting transit peptide spans 1–67 (MAKTLSRSTA…TIRTRMDRSG (67 aa)). Residues 208-232 (TNQRGSDKPKYHDRIRNVRRRENMR) form a disordered region. Residues 212 to 232 (GSDKPKYHDRIRNVRRRENMR) show a composition bias toward basic and acidic residues.

The protein belongs to the MORF family. As to quaternary structure, heterodimers with MORF8/RIP1, MORF3/RIP3, MORF6/RIP6, MORF7/RIP7 and MORF9/RIP9.

It localises to the mitochondrion. Its function is as follows. Involved in organellar RNA editing. Required for the processing of few RNA editing sites in mitochondria. This is Multiple organellar RNA editing factor 6, mitochondrial from Arabidopsis thaliana (Mouse-ear cress).